We begin with the raw amino-acid sequence, 292 residues long: Poly(U)-specific endoribonuclease-B (292 aa).

The region spanning 8-285 (VNHELSKLFN…IGTAYPALLS (278 aa)) is the EndoU domain. Active-site residues include His162, His178, and Lys224.

The protein belongs to the ENDOU family. Monomer. It depends on Mn(2+) as a cofactor.

It localises to the nucleus. The catalysed reaction is uridylyl-uridylyl-ribonucleotide-RNA = a 3'-end uridylyl-2',3'-cyclophospho-uridine-RNA + a 5'-end dephospho-ribonucleoside-RNA. In terms of biological role, poly(U)-specific endoribonuclease involved in the processing of intron-encoded box C/D snoRNAs, such as U16 and U86. Releases products that have 2',3'-cyclic phosphate termini at the 3'-end. The protein is Poly(U)-specific endoribonuclease-B (endou-b) of Xenopus laevis (African clawed frog).